A 170-amino-acid polypeptide reads, in one-letter code: CFA/I fimbrial subunit B (170 aa).

The signal sequence occupies residues 1–23 (MKFKKTIGAMALTTMFVAVSASA).

Belongs to the fimbrial CS1 protein family. In terms of assembly, CFA/I fimbriae are rather rigid, thread-like filaments of 0.5-1 micrometer, with an apparent axial hole, and a diameter of 7 nanometers. A single CFA/I fimbria consists of about 100 identical protein subunits.

The protein resides in the fimbrium. In terms of biological role, fimbriae (also called pili), polar filaments radiating from the surface of the bacterium to a length of 0.5-1.5 micrometers and numbering 100-300 per cell, enable bacteria to colonize the epithelium of specific host organs. This chain is CFA/I fimbrial subunit B (cfaB), found in Escherichia coli.